Here is a 126-residue protein sequence, read N- to C-terminus: Glycine cleavage system H protein (126 aa).

One can recognise a Lipoyl-binding domain in the interval 22 to 103 (KAYIGITDYA…PYGSWMALVE (82 aa)). An N6-lipoyllysine modification is found at K63.

The protein belongs to the GcvH family. In terms of assembly, the glycine cleavage system is composed of four proteins: P, T, L and H. It depends on (R)-lipoate as a cofactor.

In terms of biological role, the glycine cleavage system catalyzes the degradation of glycine. The H protein shuttles the methylamine group of glycine from the P protein to the T protein. This Thermoanaerobacter sp. (strain X514) protein is Glycine cleavage system H protein.